The following is a 656-amino-acid chain: uncharacterized protein (656 aa).

3 helical membrane-spanning segments follow: residues 7–27, 40–60, and 210–230; these read QQVL…LNHL, LMAM…FWTL, and AVFI…AFTI. The HAMP domain occupies 231 to 280; it reads TRPIRELLTGVKNIASGDFYQRIDLPFGGELGALIFNFNEMAERLEKYEQ. Positions 289–359 constitute a PAS domain; sequence EKAKLETLVS…PILNDIIRKN (71 aa). One can recognise a Histidine kinase domain in the interval 424-654; the sequence is NVSHELRTPL…CFFFDLMIAK (231 aa). The residue at position 427 (His427) is a Phosphohistidine; by autocatalysis.

Its subcellular location is the plastid. It localises to the chloroplast membrane. It carries out the reaction ATP + protein L-histidine = ADP + protein N-phospho-L-histidine.. This is an uncharacterized protein from Porphyra purpurea (Red seaweed).